The following is a 198-amino-acid chain: Ribosome maturation factor RimP (198 aa).

Belongs to the RimP family.

Its subcellular location is the cytoplasm. Functionally, required for maturation of 30S ribosomal subunits. The protein is Ribosome maturation factor RimP of Rhizobium etli (strain CIAT 652).